We begin with the raw amino-acid sequence, 84 residues long: Apoptosis inhibitor Rv3654c (84 aa).

The first 39 residues, 1–39 (MVARHRAQAAADLASLAAAARLPSGLAAACARATLVARA), serve as a signal peptide directing secretion.

As to quaternary structure, interacts with human polypyrimidine tract binding protein-associated splicing factor (PSF).

The protein resides in the secreted. Its subcellular location is the host cytoplasm. In terms of biological role, effector protein that participates in the suppression of macrophage apoptosis by blocking the extrinsic pathway. Recognizes the host polypyrimidine tract binding protein-associated splicing factor (PSF), which probably leads to its cleavage, diminishing the level of caspase-8 in macrophages. The sequence is that of Apoptosis inhibitor Rv3654c from Mycobacterium tuberculosis (strain ATCC 25618 / H37Rv).